The primary structure comprises 315 residues: Aspartate carbamoyltransferase catalytic subunit (315 aa).

The carbamoyl phosphate site is built by R65 and T66. K93 serves as a coordination point for L-aspartate. Carbamoyl phosphate-binding residues include R115, H145, and Q148. R179 and R234 together coordinate L-aspartate. Residues G275 and P276 each contribute to the carbamoyl phosphate site.

This sequence belongs to the aspartate/ornithine carbamoyltransferase superfamily. ATCase family. As to quaternary structure, heterododecamer (2C3:3R2) of six catalytic PyrB chains organized as two trimers (C3), and six regulatory PyrI chains organized as three dimers (R2).

The enzyme catalyses carbamoyl phosphate + L-aspartate = N-carbamoyl-L-aspartate + phosphate + H(+). Its pathway is pyrimidine metabolism; UMP biosynthesis via de novo pathway; (S)-dihydroorotate from bicarbonate: step 2/3. Its function is as follows. Catalyzes the condensation of carbamoyl phosphate and aspartate to form carbamoyl aspartate and inorganic phosphate, the committed step in the de novo pyrimidine nucleotide biosynthesis pathway. This is Aspartate carbamoyltransferase catalytic subunit from Xanthomonas campestris pv. campestris (strain 8004).